Reading from the N-terminus, the 315-residue chain is Hydroxysteroid 11-beta-dehydrogenase 1-like protein (315 aa).

The signal sequence occupies residues 1-15 (MKVLLLTGLGALFFA). NADP(+)-binding positions include 36 to 62 (GANAGVGEELAYHYARLGSHLVLTAHT), 87 to 88 (DM), and 114 to 116 (NHI). Substrate is bound at residue Ser165. Tyr178 acts as the Proton acceptor in catalysis. NADP(+)-binding positions include 178–182 (YSAAK) and 211–217 (GLRDRAS). The segment at 221–286 (AVRSSTSRPR…SKTEKNDGHL (66 aa)) is disordered. Over residues 277 to 286 (SKTEKNDGHL) the composition is skewed to basic and acidic residues.

It belongs to the short-chain dehydrogenases/reductases (SDR) family. As to expression, highly expressed in the brain.

The protein localises to the secreted. The enzyme catalyses cortisone + NADPH + H(+) = cortisol + NADP(+). Functionally, unidirectional NADP(+)-dependent cortisol dehydrogenase (in vitro). This chain is Hydroxysteroid 11-beta-dehydrogenase 1-like protein (HSD11B1L), found in Homo sapiens (Human).